We begin with the raw amino-acid sequence, 192 residues long: Elongation factor P (192 aa).

This sequence belongs to the elongation factor P family.

The protein localises to the cytoplasm. It functions in the pathway protein biosynthesis; polypeptide chain elongation. Functionally, involved in peptide bond synthesis. Stimulates efficient translation and peptide-bond synthesis on native or reconstituted 70S ribosomes in vitro. Probably functions indirectly by altering the affinity of the ribosome for aminoacyl-tRNA, thus increasing their reactivity as acceptors for peptidyl transferase. This Borrelia recurrentis (strain A1) protein is Elongation factor P.